We begin with the raw amino-acid sequence, 358 residues long: NADH-quinone oxidoreductase subunit H (358 aa).

A run of 8 helical transmembrane segments spans residues 30–50, 96–116, 129–149, 165–185, 201–221, 264–284, 297–317, and 336–356; these read IVIGVCIMLAYAVIAIIMIFM, FLYNLAPYIVILASIMAFSCL, VGIFFLLAASSIGVVGILLAG, GAQMISYELSVGLSILTIVIL, GWFLFKGHIPALIAFIIYLIA, LFIIAAVATTIFLGGWMPLHI, IPGFIWFFGKSFFVVWLLMWI, and YLVPIGLCNLLLMVIIVVFKL.

Belongs to the complex I subunit 1 family. As to quaternary structure, NDH-1 is composed of 14 different subunits. Subunits NuoA, H, J, K, L, M, N constitute the membrane sector of the complex.

The protein resides in the cell inner membrane. The enzyme catalyses a quinone + NADH + 5 H(+)(in) = a quinol + NAD(+) + 4 H(+)(out). In terms of biological role, NDH-1 shuttles electrons from NADH, via FMN and iron-sulfur (Fe-S) centers, to quinones in the respiratory chain. The immediate electron acceptor for the enzyme in this species is believed to be ubiquinone. Couples the redox reaction to proton translocation (for every two electrons transferred, four hydrogen ions are translocated across the cytoplasmic membrane), and thus conserves the redox energy in a proton gradient. This subunit may bind ubiquinone. The polypeptide is NADH-quinone oxidoreductase subunit H (Phocaeicola vulgatus (strain ATCC 8482 / DSM 1447 / JCM 5826 / CCUG 4940 / NBRC 14291 / NCTC 11154) (Bacteroides vulgatus)).